The sequence spans 393 residues: MAGPEWQSLEQCLEKHLPPDDLAQVKRILYGKQTRNLDLPREALKAASERNFELKGYAFGAAKEQQRCPQIVRVGLVQNRIPLPTSAPVAEQVSALHKSIEEIAEVAAMCGVNIICFQEAWNMPFAFCTREKLPWTEFAESAEDGLTTRFCQKLAKKHNMVVVSPILERDREHGGVLWNTAVVISNSGLVMGKTRKNHIPRVGDFNESTYYMEGNLGHPVFQTQFGRIAVNICYGRHHPLNWLMYSINGAEIIFNPSATIGELSESLWPIEARNAAIANHCFTCALNRVGQEHFPNEFTSGDGKKAHHDLGYFYGSSYVAAPDGSRTPGLSRNQDGLLVTELNLNLCQQINDFWTFKMTGRLEMYARELAEAVKPNYSPNIVKEDLVLAPSSG.

Residues 72 to 344 enclose the CN hydrolase domain; it reads VRVGLVQNRI…DGLLVTELNL (273 aa). Residue Glu-119 is the Proton acceptor of the active site. Lys-196 functions as the Proton donor in the catalytic mechanism. The active-site Nucleophile is Cys-233. Residue Ser-378 is modified to Phosphoserine.

This sequence belongs to the carbon-nitrogen hydrolase superfamily. BUP family. As to quaternary structure, homodimer, homotetramer, homooctamer; can also form higher homooligomers.

The protein localises to the cytoplasm. The enzyme catalyses 3-(carbamoylamino)propanoate + H2O + 2 H(+) = beta-alanine + NH4(+) + CO2. The catalysed reaction is 3-(carbamoylamino)-2-methylpropanoate + H2O + 2 H(+) = (R)-3-amino-2-methylpropanoate + NH4(+) + CO2. The protein operates within amino-acid biosynthesis; beta-alanine biosynthesis. Functionally, catalyzes a late step in pyrimidine degradation. Converts N-carbamoyl-beta-alanine (3-ureidopropanoate) into beta-alanine, ammonia and carbon dioxide. Likewise, converts N-carbamoyl-beta-aminoisobutyrate (3-ureidoisobutyrate) into beta-aminoisobutyrate, ammonia and carbon dioxide. This chain is Beta-ureidopropionase (Upb1), found in Mus musculus (Mouse).